Here is a 434-residue protein sequence, read N- to C-terminus: Probable glycine dehydrogenase (decarboxylating) subunit 1 (434 aa).

The protein belongs to the GcvP family. N-terminal subunit subfamily. In terms of assembly, the glycine cleavage system is composed of four proteins: P, T, L and H. In this organism, the P 'protein' is a heterodimer of two subunits.

The enzyme catalyses N(6)-[(R)-lipoyl]-L-lysyl-[glycine-cleavage complex H protein] + glycine + H(+) = N(6)-[(R)-S(8)-aminomethyldihydrolipoyl]-L-lysyl-[glycine-cleavage complex H protein] + CO2. In terms of biological role, the glycine cleavage system catalyzes the degradation of glycine. The P protein binds the alpha-amino group of glycine through its pyridoxal phosphate cofactor; CO(2) is released and the remaining methylamine moiety is then transferred to the lipoamide cofactor of the H protein. The sequence is that of Probable glycine dehydrogenase (decarboxylating) subunit 1 from Thermoplasma volcanium (strain ATCC 51530 / DSM 4299 / JCM 9571 / NBRC 15438 / GSS1).